Consider the following 281-residue polypeptide: Probable endonuclease 4 (281 aa).

Zn(2+) contacts are provided by H67, H107, E144, D178, H181, H215, D228, H230, and E260.

The protein belongs to the AP endonuclease 2 family. Zn(2+) is required as a cofactor.

The catalysed reaction is Endonucleolytic cleavage to 5'-phosphooligonucleotide end-products.. Functionally, endonuclease IV plays a role in DNA repair. It cleaves phosphodiester bonds at apurinic or apyrimidinic (AP) sites, generating a 3'-hydroxyl group and a 5'-terminal sugar phosphate. This Methanocorpusculum labreanum (strain ATCC 43576 / DSM 4855 / Z) protein is Probable endonuclease 4.